The chain runs to 685 residues: Polyphosphate kinase (685 aa).

Asn45 is an ATP binding site. Residues Arg372 and Arg402 each coordinate Mg(2+). The region spanning 427–461 (PGLKIHAKLFLISRKEGDDVVRYAHIGTGNFNEKT) is the PLD phosphodiesterase 1 domain. His432 (phosphohistidine intermediate) is an active-site residue. ATP-binding residues include Tyr465, Arg561, and His589. One can recognise a PLD phosphodiesterase 2 domain in the interval 584–614 (DRYLEHDRIYIFDNAGDKQVYLSSADWMTRN).

The protein belongs to the polyphosphate kinase 1 (PPK1) family. Mg(2+) is required as a cofactor. Post-translationally, an intermediate of this reaction is the autophosphorylated ppk in which a phosphate is covalently linked to a histidine residue through a N-P bond.

It carries out the reaction [phosphate](n) + ATP = [phosphate](n+1) + ADP. Functionally, catalyzes the reversible transfer of the terminal phosphate of ATP to form a long-chain polyphosphate (polyP). This chain is Polyphosphate kinase, found in Klebsiella pneumoniae.